Reading from the N-terminus, the 398-residue chain is Bifunctional enzyme IspD/IspF (398 aa).

The segment at 1–234 (MPSSKRTAAI…ARLAAALGDI (234 aa)) is 2-C-methyl-D-erythritol 4-phosphate cytidylyltransferase. A 2-C-methyl-D-erythritol 2,4-cyclodiphosphate synthase region spans residues 235–398 (RTGTGYDVHA…LPWNDKGRDT (164 aa)). A divalent metal cation is bound by residues Asp241 and His243. Residues 241 to 243 (DVH) and 267 to 268 (HS) each bind 4-CDP-2-C-methyl-D-erythritol 2-phosphate. Position 275 (His275) interacts with a divalent metal cation. 4-CDP-2-C-methyl-D-erythritol 2-phosphate is bound by residues 289-291 (DIG), 365-368 (TTSE), Phe372, and Arg375.

In the N-terminal section; belongs to the IspD/TarI cytidylyltransferase family. IspD subfamily. It in the C-terminal section; belongs to the IspF family. A divalent metal cation is required as a cofactor.

The enzyme catalyses 2-C-methyl-D-erythritol 4-phosphate + CTP + H(+) = 4-CDP-2-C-methyl-D-erythritol + diphosphate. The catalysed reaction is 4-CDP-2-C-methyl-D-erythritol 2-phosphate = 2-C-methyl-D-erythritol 2,4-cyclic diphosphate + CMP. The protein operates within isoprenoid biosynthesis; isopentenyl diphosphate biosynthesis via DXP pathway; isopentenyl diphosphate from 1-deoxy-D-xylulose 5-phosphate: step 2/6. It participates in isoprenoid biosynthesis; isopentenyl diphosphate biosynthesis via DXP pathway; isopentenyl diphosphate from 1-deoxy-D-xylulose 5-phosphate: step 4/6. Bifunctional enzyme that catalyzes the formation of 4-diphosphocytidyl-2-C-methyl-D-erythritol from CTP and 2-C-methyl-D-erythritol 4-phosphate (MEP) (IspD), and catalyzes the conversion of 4-diphosphocytidyl-2-C-methyl-D-erythritol 2-phosphate (CDP-ME2P) to 2-C-methyl-D-erythritol 2,4-cyclodiphosphate (ME-CPP) with a corresponding release of cytidine 5-monophosphate (CMP) (IspF). The sequence is that of Bifunctional enzyme IspD/IspF from Nitrobacter winogradskyi (strain ATCC 25391 / DSM 10237 / CIP 104748 / NCIMB 11846 / Nb-255).